The chain runs to 242 residues: Ribonuclease 3 (242 aa).

In terms of domain architecture, RNase III spans 10-146; sequence LQNFNKKFAD…FVGALYLDQG (137 aa). Glutamate 59 serves as a coordination point for Mg(2+). Residue aspartate 63 is part of the active site. Residues aspartate 132 and glutamate 135 each coordinate Mg(2+). Glutamate 135 is a catalytic residue. The region spanning 172 to 241 is the DRBM domain; it reads DFKTQFQELI…AEKAYNDMKK (70 aa). Residues 216–242 form a disordered region; it reads VAKGQGRTKKESEQKAAEKAYNDMKKK. A compositionally biased stretch (basic and acidic residues) spans 223-242; that stretch reads TKKESEQKAAEKAYNDMKKK.

The protein belongs to the ribonuclease III family. In terms of assembly, homodimer. Mg(2+) is required as a cofactor.

Its subcellular location is the cytoplasm. It catalyses the reaction Endonucleolytic cleavage to 5'-phosphomonoester.. Digests double-stranded RNA. Involved in the processing of primary rRNA transcript to yield the immediate precursors to the large and small rRNAs (23S and 16S). Processes some mRNAs, and tRNAs when they are encoded in the rRNA operon. Processes pre-crRNA and tracrRNA of type II CRISPR loci if present in the organism. This chain is Ribonuclease 3, found in Staphylococcus carnosus (strain TM300).